The sequence spans 134 residues: Glycine cleavage system H protein (134 aa).

The 83-residue stretch at 24–106 folds into the Lipoyl-binding domain; sequence TVRVGITDYA…YGAGWLLDIQ (83 aa). Residue Lys-65 is modified to N6-lipoyllysine.

It belongs to the GcvH family. The glycine cleavage system is composed of four proteins: P, T, L and H. Requires (R)-lipoate as cofactor.

The glycine cleavage system catalyzes the degradation of glycine. The H protein shuttles the methylamine group of glycine from the P protein to the T protein. The polypeptide is Glycine cleavage system H protein (Mycobacterium tuberculosis (strain ATCC 25177 / H37Ra)).